Here is a 436-residue protein sequence, read N- to C-terminus: Trigger factor (436 aa).

The PPIase FKBP-type domain occupies 163-248 (GDRVTVDFEG…VKKIEAAHLP (86 aa)).

Belongs to the FKBP-type PPIase family. Tig subfamily.

Its subcellular location is the cytoplasm. It catalyses the reaction [protein]-peptidylproline (omega=180) = [protein]-peptidylproline (omega=0). Involved in protein export. Acts as a chaperone by maintaining the newly synthesized protein in an open conformation. Functions as a peptidyl-prolyl cis-trans isomerase. This Paracidovorax citrulli (strain AAC00-1) (Acidovorax citrulli) protein is Trigger factor.